The sequence spans 868 residues: Pro-neuregulin-2, membrane-bound isoform (868 aa).

Residues 1-114 (MRQVCCSALP…AAGGMRRDPA (114 aa)) form a disordered region. Positions 1-127 (MRQVCCSALP…SMLLFGVSLA (127 aa)) are excised as a propeptide. Residues 19–75 (SSYSYSDSSSSSSSNNSSSSTSSRSSSRSSSRSSRGSTTTTSSSENSGSNSGSIFRP) are compositionally biased toward low complexity. N-linked (GlcNAc...) asparagine glycans are attached at residues Asn33 and Asn34. Residues 76–90 (AAPPEPRPQPQPQPR) are compositionally biased toward pro residues. Residues 91–108 (SPAARRAAARSRAAAAGG) are compositionally biased toward low complexity. Residues 128-429 (CYSPSLKSVQ…KEAEELYQKR (302 aa)) lie on the Extracellular side of the membrane. 3 N-linked (GlcNAc...) asparagine glycosylation sites follow: Asn163, Asn294, and Asn362. Residues 253 to 348 (PKLKKMKSQT…RGRLHVNSVS (96 aa)) enclose the Ig-like C2-type domain. 4 disulfides stabilise this stretch: Cys273–Cys327, Cys361–Cys375, Cys369–Cys386, and Cys388–Cys397. Residues 357 to 398 (HARKCNETAKSYCVNGGVCYYIEGINQLSCKCPNGFFGQRCL) form the EGF-like domain. The helical transmembrane segment at 430 to 450 (VLTITGICVALLVVGIVCVVA) threads the bilayer. The Cytoplasmic segment spans residues 451–868 (YCKTKKQRRQ…TRAKQDSGPL (418 aa)). 5 disordered regions span residues 469–488 (MCPA…PRLD), 516–553 (TFSG…SESL), 671–690 (LLRH…DMQR), 720–806 (ASPF…DGAL), and 823–868 (LRSD…SGPL). The segment covering 518-530 (SGSHSCSPSHHCS) has biased composition (low complexity). A compositionally biased stretch (basic and acidic residues) spans 538 to 551 (HRHESHTWSLERSE). The span at 766 to 794 (LNGLAAQRARAARDSLSLSSGSGCGSASA) shows a compositional bias: low complexity.

This sequence belongs to the neuregulin family. Interacts with ERBB3 and ERBB4. In terms of processing, proteolytic cleavage close to the plasma membrane on the external face leads to the release of the soluble growth factor form. Extensive glycosylation precedes the proteolytic cleavage. In terms of tissue distribution, expressed in most parts of the brain, especially the olfactory bulb and cerebellum where it localizes in granule and Purkinje cells. In the hippocampus, found in the granule cells of the dentate gyrus. In the basal forebrain, found in the cholinergic cells. In the hindbrain, weakly detectable in the motor trigeminal nucleus. Not detected in the hypothalamus. Also found in the liver and in the thymus. Not detected in heart, adrenal gland, or testis.

It localises to the cell membrane. The protein localises to the secreted. Its function is as follows. Direct ligand for ERBB3 and ERBB4 tyrosine kinase receptors. Concomitantly recruits ERBB1 and ERBB2 coreceptors, resulting in ligand-stimulated tyrosine phosphorylation and activation of the ERBB receptors. May also promote the heterodimerization with the EGF receptor. The chain is Pro-neuregulin-2, membrane-bound isoform (Nrg2) from Rattus norvegicus (Rat).